Reading from the N-terminus, the 187-residue chain is Orotate phosphoribosyltransferase (187 aa).

5-phospho-alpha-D-ribose 1-diphosphate is bound by residues Arg-98, Lys-99, Lys-102, His-104, and Glu-128–Ser-136. Orotate contacts are provided by Thr-132 and Arg-160.

It belongs to the purine/pyrimidine phosphoribosyltransferase family. PyrE subfamily. As to quaternary structure, homodimer. The cofactor is Mg(2+).

It catalyses the reaction orotidine 5'-phosphate + diphosphate = orotate + 5-phospho-alpha-D-ribose 1-diphosphate. The protein operates within pyrimidine metabolism; UMP biosynthesis via de novo pathway; UMP from orotate: step 1/2. Functionally, catalyzes the transfer of a ribosyl phosphate group from 5-phosphoribose 1-diphosphate to orotate, leading to the formation of orotidine monophosphate (OMP). In Rhodopseudomonas palustris (strain BisB5), this protein is Orotate phosphoribosyltransferase.